Reading from the N-terminus, the 204-residue chain is Ribosome maturation factor RimP (204 aa).

Positions 177 to 204 (NFDESQFDEIQETEGEEADEAETPITRH) are disordered. A compositionally biased stretch (acidic residues) spans 181 to 198 (SQFDEIQETEGEEADEAE).

Belongs to the RimP family.

It is found in the cytoplasm. Its function is as follows. Required for maturation of 30S ribosomal subunits. The protein is Ribosome maturation factor RimP of Cereibacter sphaeroides (strain ATCC 17025 / ATH 2.4.3) (Rhodobacter sphaeroides).